A 209-amino-acid chain; its full sequence is Large ribosomal subunit protein uL3 (209 aa).

The segment at 117–142 is disordered; sequence FQGPIKRHGQSRGPETHGSRYHRRPG.

Belongs to the universal ribosomal protein uL3 family. In terms of assembly, part of the 50S ribosomal subunit. Forms a cluster with proteins L14 and L19.

Functionally, one of the primary rRNA binding proteins, it binds directly near the 3'-end of the 23S rRNA, where it nucleates assembly of the 50S subunit. The protein is Large ribosomal subunit protein uL3 of Clostridioides difficile (strain 630) (Peptoclostridium difficile).